We begin with the raw amino-acid sequence, 393 residues long: MGEGGAAAALVAAAAAAAAAAAAVVAGQRRRRLGRRARCHGPGRAAGGKMSKPCAVEAAAAAVAATAPGPEMVERRGPGRPRTDGENVFTGQSKIYSYMSPNKCSGMRFPLQEENSVTHHEVKCQGKPLAGIYRKREEKRNAGNAVRSAMKSEEQKIKDARKGPLVPFPNQKSEAAEPPKTPPSSCDSTNAAIAKQALKKPIKGKQAPRKKAQGKTQQNRKLTDFYPVRRSSRKSKAELQSEERKRIDELIESGKEEGMKIDLIDGKGRGVIATKQFSRGDFVVEYHGDLIEITDAKKREALYAQDPSTGCYMYYFQYLSKTYCVDATRETNRLGRLINHSKCGNCQTKLHDIDGVPHLILIASRDIAAGEELLYDYGDRSKASIEAHPWLKH.

The tract at residues 68–88 (PGPEMVERRGPGRPRTDGENV) is disordered. The segment covering 72–85 (MVERRGPGRPRTDG) has biased composition (basic and acidic residues). S100 bears the Phosphoserine mark. Positions 134-163 (RKREEKRNAGNAVRSAMKSEEQKIKDARKG) form a coiled coil. The tract at residues 135–241 (KREEKRNAGN…SRKSKAELQS (107 aa)) is disordered. Positions 150–162 (MKSEEQKIKDARK) are enriched in basic and acidic residues. N6-acetyllysine is present on K162. Residue T181 is modified to Phosphothreonine. A compositionally biased stretch (basic residues) spans 197 to 213 (ALKKPIKGKQAPRKKAQ). One can recognise an SET domain in the interval 257–378 (EGMKIDLIDG…AGEELLYDYG (122 aa)). Residues 267 to 269 (KGR), Y312, and 339 to 340 (NH) each bind S-adenosyl-L-methionine.

It belongs to the class V-like SAM-binding methyltransferase superfamily. Histone-lysine methyltransferase family. PR/SET subfamily. In terms of assembly, interacts with L3MBTL1. Interacts with SIRT2 (phosphorylated form); the interaction is direct, stimulates KMT5A-mediated methyltransferase activity at histone H4 'Lys-20' (H4K20me1) and is increased in a H(2)O(2)-induced oxidative stress-dependent manner. Post-translationally, acetylated at Lys-162; does not affect methyltransferase activity. Deacetylated at Lys-162 possibly by SIRT2; does not change methyltransferase activity. Ubiquitinated and degraded by the DCX(DTL) complex.

The protein resides in the nucleus. Its subcellular location is the chromosome. The catalysed reaction is L-lysyl(20)-[histone H4] + S-adenosyl-L-methionine = N(6)-methyl-L-lysyl(20)-[histone H4] + S-adenosyl-L-homocysteine + H(+). It carries out the reaction L-lysyl-[protein] + S-adenosyl-L-methionine = N(6)-methyl-L-lysyl-[protein] + S-adenosyl-L-homocysteine + H(+). Protein-lysine N-methyltransferase that monomethylates both histones and non-histone proteins. Specifically monomethylates 'Lys-20' of histone H4 (H4K20me1). H4K20me1 is enriched during mitosis and represents a specific tag for epigenetic transcriptional repression. Mainly functions in euchromatin regions, thereby playing a central role in the silencing of euchromatic genes. Required for cell proliferation, probably by contributing to the maintenance of proper higher-order structure of DNA during mitosis. Involved in chromosome condensation and proper cytokinesis. Nucleosomes are preferred as substrate compared to free histones. Mediates monomethylation of p53/TP53 at 'Lys-382', leading to repress p53/TP53-target genes. Plays a negative role in TGF-beta response regulation and a positive role in cell migration. This chain is N-lysine methyltransferase KMT5A, found in Homo sapiens (Human).